The sequence spans 483 residues: Glutamyl-tRNA(Gln) amidotransferase subunit A (483 aa).

Residues Lys75 and Ser150 each act as charge relay system in the active site. The active-site Acyl-ester intermediate is the Ser174.

Belongs to the amidase family. GatA subfamily. As to quaternary structure, heterotrimer of A, B and C subunits.

The catalysed reaction is L-glutamyl-tRNA(Gln) + L-glutamine + ATP + H2O = L-glutaminyl-tRNA(Gln) + L-glutamate + ADP + phosphate + H(+). Allows the formation of correctly charged Gln-tRNA(Gln) through the transamidation of misacylated Glu-tRNA(Gln) in organisms which lack glutaminyl-tRNA synthetase. The reaction takes place in the presence of glutamine and ATP through an activated gamma-phospho-Glu-tRNA(Gln). The chain is Glutamyl-tRNA(Gln) amidotransferase subunit A from Legionella pneumophila subsp. pneumophila (strain Philadelphia 1 / ATCC 33152 / DSM 7513).